A 271-amino-acid polypeptide reads, in one-letter code: Aminoglycoside 3'-phosphotransferase (271 aa).

The Proton acceptor role is filled by Asp-198.

It belongs to the aminoglycoside phosphotransferase family.

The catalysed reaction is kanamycin A + ATP = kanamycin 3'-phosphate + ADP + H(+). Functionally, resistance to kanamycin and structurally-related aminoglycosides, including amikacin. The chain is Aminoglycoside 3'-phosphotransferase from Salmonella typhimurium.